The primary structure comprises 328 residues: Probable fused nickel transport protein LarMN (328 aa).

8 helical membrane passes run 8-28, 42-62, 75-95, 103-123, 138-158, 187-207, 229-249, and 296-316; these read LSPATCGTLVTAMAPVWTVAV, LPMLGIAASLAFLIMMFNLPI, LLAVLIGPWAACLALTVTLLL, GGILAFGANALNMAVIMPFVG, LGLAIGAYLGINMAALVAGIE, MLTAHLLVAGWVEVVFTLLVF, PWIALLLGLAVLSPLGLLASN, and PVSVGYILSAITAVLIFLLLI.

This sequence belongs to the CbiM family. NikM subfamily. As to quaternary structure, may form an energy-coupling factor (ECF) transporter complex composed of an ATP-binding protein (A component, LarO), a transmembrane protein (T component, LarQ) and a fused possible substrate-capture protein (S component, LarMN) of unknown stoichiometry.

It localises to the cell membrane. Probably part of the energy-coupling factor (ECF) transporter complex LarMNQO involved in nickel import. This Lactiplantibacillus plantarum (strain ATCC BAA-793 / NCIMB 8826 / WCFS1) (Lactobacillus plantarum) protein is Probable fused nickel transport protein LarMN.